We begin with the raw amino-acid sequence, 87 residues long: Pyocin-S1 immunity protein (87 aa).

This sequence belongs to the colicins ColE2/ColE8/ColE9 and pyocins S1/S2 family.

The chain is Pyocin-S1 immunity protein (imm1) from Pseudomonas aeruginosa.